A 735-amino-acid polypeptide reads, in one-letter code: Photosystem I P700 chlorophyll a apoprotein A2 (735 aa).

Helical transmembrane passes span 47–70, 136–159, 176–200, 274–292, 331–354, 370–396, 418–440, and 518–536; these read IFASHFGQLAIIFLWTSGNLFHVA, LFTGSVFLALVSAVFLFAGWLHLQ, LNHHLSGLFGVSSLAWTGHLVHVAI, MAHHHLAIAVIFIVAGHMY, LHFQLGLALASVGTITSMIAQHIY, AALYTHHQYIAGFIMCGAFAHGAIFFI, AIISHLSWVTLFLGFHTLGLYVH, and FLVHHAIALGLHTTTLILV. The [4Fe-4S] cluster site is built by cysteine 560 and cysteine 569. 2 helical membrane-spanning segments follow: residues 576 to 597 and 644 to 666; these read AFYLAVFWMLNTIGWVTFYFHW and LSVWAFCFLFGHLIYATGFMFLI. Chlorophyll a is bound by residues histidine 655, methionine 663, and tyrosine 671. Tryptophan 672 is a binding site for phylloquinone. The chain crosses the membrane as a helical span at residues 708–728; it reads LVGLVHFSVGYIFTYAAFLIA.

The protein belongs to the PsaA/PsaB family. The PsaA/B heterodimer binds the P700 chlorophyll special pair and subsequent electron acceptors. PSI consists of a core antenna complex that captures photons, and an electron transfer chain that converts photonic excitation into a charge separation. The eukaryotic PSI reaction center is composed of at least 11 subunits. P700 is a chlorophyll a/chlorophyll a' dimer, A0 is one or more chlorophyll a, A1 is one or both phylloquinones and FX is a shared 4Fe-4S iron-sulfur center. is required as a cofactor.

It localises to the plastid. It is found in the chloroplast thylakoid membrane. It catalyses the reaction reduced [plastocyanin] + hnu + oxidized [2Fe-2S]-[ferredoxin] = oxidized [plastocyanin] + reduced [2Fe-2S]-[ferredoxin]. In terms of biological role, psaA and PsaB bind P700, the primary electron donor of photosystem I (PSI), as well as the electron acceptors A0, A1 and FX. PSI is a plastocyanin/cytochrome c6-ferredoxin oxidoreductase, converting photonic excitation into a charge separation, which transfers an electron from the donor P700 chlorophyll pair to the spectroscopically characterized acceptors A0, A1, FX, FA and FB in turn. Oxidized P700 is reduced on the lumenal side of the thylakoid membrane by plastocyanin or cytochrome c6. This chain is Photosystem I P700 chlorophyll a apoprotein A2, found in Chlamydomonas moewusii (Chlamydomonas eugametos).